A 473-amino-acid chain; its full sequence is ATP synthase subunit beta (473 aa).

158-165 contacts ATP; that stretch reads GGAGVGKT.

It belongs to the ATPase alpha/beta chains family. As to quaternary structure, F-type ATPases have 2 components, CF(1) - the catalytic core - and CF(0) - the membrane proton channel. CF(1) has five subunits: alpha(3), beta(3), gamma(1), delta(1), epsilon(1). CF(0) has three main subunits: a(1), b(2) and c(9-12). The alpha and beta chains form an alternating ring which encloses part of the gamma chain. CF(1) is attached to CF(0) by a central stalk formed by the gamma and epsilon chains, while a peripheral stalk is formed by the delta and b chains.

Its subcellular location is the cell membrane. The enzyme catalyses ATP + H2O + 4 H(+)(in) = ADP + phosphate + 5 H(+)(out). In terms of biological role, produces ATP from ADP in the presence of a proton gradient across the membrane. The catalytic sites are hosted primarily by the beta subunits. The polypeptide is ATP synthase subunit beta (Carboxydothermus hydrogenoformans (strain ATCC BAA-161 / DSM 6008 / Z-2901)).